The primary structure comprises 338 residues: 4-hydroxy-3-methylbut-2-enyl diphosphate reductase (338 aa).

Cysteine 21 contacts [4Fe-4S] cluster. Histidine 50 and histidine 83 together coordinate (2E)-4-hydroxy-3-methylbut-2-enyl diphosphate. Residues histidine 50 and histidine 83 each contribute to the dimethylallyl diphosphate site. Positions 50 and 83 each coordinate isopentenyl diphosphate. Position 105 (cysteine 105) interacts with [4Fe-4S] cluster. Histidine 133 serves as a coordination point for (2E)-4-hydroxy-3-methylbut-2-enyl diphosphate. Histidine 133 provides a ligand contact to dimethylallyl diphosphate. Position 133 (histidine 133) interacts with isopentenyl diphosphate. The active-site Proton donor is the glutamate 135. Residue threonine 173 coordinates (2E)-4-hydroxy-3-methylbut-2-enyl diphosphate. Cysteine 203 lines the [4Fe-4S] cluster pocket. Residues serine 231, serine 232, asparagine 233, and serine 276 each contribute to the (2E)-4-hydroxy-3-methylbut-2-enyl diphosphate site. Dimethylallyl diphosphate-binding residues include serine 231, serine 232, asparagine 233, and serine 276. Isopentenyl diphosphate-binding residues include serine 231, serine 232, asparagine 233, and serine 276.

This sequence belongs to the IspH family. Requires [4Fe-4S] cluster as cofactor.

It carries out the reaction isopentenyl diphosphate + 2 oxidized [2Fe-2S]-[ferredoxin] + H2O = (2E)-4-hydroxy-3-methylbut-2-enyl diphosphate + 2 reduced [2Fe-2S]-[ferredoxin] + 2 H(+). It catalyses the reaction dimethylallyl diphosphate + 2 oxidized [2Fe-2S]-[ferredoxin] + H2O = (2E)-4-hydroxy-3-methylbut-2-enyl diphosphate + 2 reduced [2Fe-2S]-[ferredoxin] + 2 H(+). It functions in the pathway isoprenoid biosynthesis; dimethylallyl diphosphate biosynthesis; dimethylallyl diphosphate from (2E)-4-hydroxy-3-methylbutenyl diphosphate: step 1/1. The protein operates within isoprenoid biosynthesis; isopentenyl diphosphate biosynthesis via DXP pathway; isopentenyl diphosphate from 1-deoxy-D-xylulose 5-phosphate: step 6/6. Its function is as follows. Catalyzes the conversion of 1-hydroxy-2-methyl-2-(E)-butenyl 4-diphosphate (HMBPP) into a mixture of isopentenyl diphosphate (IPP) and dimethylallyl diphosphate (DMAPP). Acts in the terminal step of the DOXP/MEP pathway for isoprenoid precursor biosynthesis. In Streptomyces avermitilis (strain ATCC 31267 / DSM 46492 / JCM 5070 / NBRC 14893 / NCIMB 12804 / NRRL 8165 / MA-4680), this protein is 4-hydroxy-3-methylbut-2-enyl diphosphate reductase.